A 106-amino-acid chain; its full sequence is ATP-dependent Clp protease adapter protein ClpS (106 aa).

The protein belongs to the ClpS family. Binds to the N-terminal domain of the chaperone ClpA.

In terms of biological role, involved in the modulation of the specificity of the ClpAP-mediated ATP-dependent protein degradation. The protein is ATP-dependent Clp protease adapter protein ClpS of Vibrio atlanticus (strain LGP32) (Vibrio splendidus (strain Mel32)).